A 176-amino-acid chain; its full sequence is Magnetosome protein MamT (176 aa).

Topologically, residues 1–11 (MSMEAPRRGRR) are cytoplasmic. A helical membrane pass occupies residues 12–30 (WVSLGMIALLAAIGLGLYW). Residues 31 to 176 (DQLSTPSGIT…DKKGGMRWQL (146 aa)) are Lumenal-facing. An MCR (magnetochrome) 1 motif is present at residues 89-109 (VKPGTGMPHPYVGDCIQCHLM). Heme is bound by residues Cys-103, Cys-106, His-107, Cys-154, Cys-157, and His-158. Residues 140 to 160 (ILPTSRQPHPPAGRCIKCHDI) carry the MCR 2 motif.

The protein belongs to the magnetosome MamT family. Heme is required as a cofactor.

It is found in the magnetosome membrane. May play a role in magnetite crystal maturation. May transfer electrons to balance the Fe(2+)-Fe(3+) ratio during magnetite formation. This Paramagnetospirillum magneticum (strain ATCC 700264 / AMB-1) (Magnetospirillum magneticum) protein is Magnetosome protein MamT (mamT).